A 643-amino-acid polypeptide reads, in one-letter code: 1-deoxy-D-xylulose-5-phosphate synthase (643 aa).

Thiamine diphosphate-binding positions include H78 and A119–S121. Residue D150 coordinates Mg(2+). Thiamine diphosphate is bound by residues G151 to A152, N179, Y288, and E370. Mg(2+) is bound at residue N179.

Belongs to the transketolase family. DXPS subfamily. Homodimer. Mg(2+) is required as a cofactor. It depends on thiamine diphosphate as a cofactor.

The catalysed reaction is D-glyceraldehyde 3-phosphate + pyruvate + H(+) = 1-deoxy-D-xylulose 5-phosphate + CO2. Its pathway is metabolic intermediate biosynthesis; 1-deoxy-D-xylulose 5-phosphate biosynthesis; 1-deoxy-D-xylulose 5-phosphate from D-glyceraldehyde 3-phosphate and pyruvate: step 1/1. Its function is as follows. Catalyzes the acyloin condensation reaction between C atoms 2 and 3 of pyruvate and glyceraldehyde 3-phosphate to yield 1-deoxy-D-xylulose-5-phosphate (DXP). The polypeptide is 1-deoxy-D-xylulose-5-phosphate synthase (Xanthobacter autotrophicus (strain ATCC BAA-1158 / Py2)).